The sequence spans 565 residues: Nephronectin (565 aa).

Residues 1–19 (MDFLLALVLVSSLYLQAAA) form the signal peptide. The EGF-like 1 domain occupies 52–87 (SWGQCQPVCQPRCKHGECIGPNKCKCHPGYAGKTCN). Disulfide bonds link cysteine 56/cysteine 69, cysteine 60/cysteine 75, cysteine 77/cysteine 86, cysteine 93/cysteine 104, cysteine 100/cysteine 113, and cysteine 115/cysteine 127. Residues 89–128 (DLNECGLKPRPCKHRCMNTYGSYKCYCLNGYMLMPDGSCS) enclose the EGF-like 2; calcium-binding domain. Residues 132–168 (TCSMANCQYGCDVVKGQIRCQCPSPGLQLAPDGRTCV) form the EGF-like 3 domain. Positions 169–213 (DVDECATGRASCPRFRQCVNTFGSYICKCHKGFDLMYIGGKYQCH) constitute an EGF-like 4; calcium-binding domain. Intrachain disulfides connect cysteine 173–cysteine 186, cysteine 180–cysteine 195, cysteine 197–cysteine 212, cysteine 218–cysteine 231, cysteine 225–cysteine 240, and cysteine 242–cysteine 253. One can recognise an EGF-like 5; calcium-binding domain in the interval 214-254 (DIDECSLGQYQCSSFARCYNIRGSYKCKCKEGYQGDGLTCV). The interval 301-389 (YIPPIITNRP…KPRGDVFIPR (89 aa)) is disordered. The segment covering 304–316 (PIITNRPTSKPTT) has biased composition (low complexity). Residues 317–347 (RPTPKPTPIPTPPPPPPLPTELRTPLPPTTP) are compositionally biased toward pro residues. An Integrin interaction motif is present at residues 382-384 (RGD). One can recognise an MAM domain in the interval 420–563 (HSCNFDHGLC…VSLKKGHCSE (144 aa)).

It belongs to the nephronectin family. As to quaternary structure, homodimer and homotrimer. In terms of tissue distribution, expressed in kidney and lung and to a lower extent in brain, pregnant uterus, placenta, thyroid gland and blood vessels.

The protein localises to the secreted. Its subcellular location is the extracellular space. It localises to the extracellular matrix. In terms of biological role, functional ligand of integrin alpha-8/beta-1 in kidney development. Regulates the expression of GDNF with integrin alpha-8/beta-1 which is essential for kidney development. May also play a role in the development and function of various tissues, regulating cell adhesion, spreading and survival through the binding of several integrins. This Homo sapiens (Human) protein is Nephronectin (NPNT).